We begin with the raw amino-acid sequence, 397 residues long: Lysophospholipid transporter LplT (397 aa).

Over 1-17 (MSESVHTNTSLWSKGMK) the chain is Periplasmic. Residues 18 to 38 (AVIVAQFLSAFGDNALLFATL) traverse the membrane as a helical segment. The Cytoplasmic segment spans residues 39 to 52 (ALLKAQFYPEWSQP). Residues 53–73 (VLQMVFVGAYILFAPFVGQVA) traverse the membrane as a helical segment. Residues 74–90 (DSFAKGRVMMFANGLKL) lie on the Periplasmic side of the membrane. The chain crosses the membrane as a helical span at residues 91–111 (LGAASICFGFNPFVGYTLVGI). At 112 to 144 (GAAAYSPAKYGILGELTTGDKLVKANGLMEAST) the chain is on the cytoplasmic side. A helical membrane pass occupies residues 145 to 165 (IAAILLGSVAGGVLADLHVLV). Position 166 (A166) is a topological domain, periplasmic. The helical transmembrane segment at 167–187 (LAACALAYAGAVAANIYIPKL) threads the bilayer. Over 188-226 (AAARPGQSWNVLKMTCSFKSACTSLWQNGETRFSLVGTS) the chain is Cytoplasmic. A helical membrane pass occupies residues 227–247 (LFWGAGVTLRFLLVLWVPVAL). The Periplasmic segment spans residues 248–256 (GITDNATPT). The chain crosses the membrane as a helical span at residues 257–277 (YLNAMVAIGIVLGAGAAAKLV). The Cytoplasmic portion of the chain corresponds to 278–280 (TLE). The helical transmembrane segment at 281–301 (TVSRCMPAGILIGVVVLFFSL) threads the bilayer. The Periplasmic portion of the chain corresponds to 302–304 (QHE). The chain crosses the membrane as a helical span at residues 305–325 (LLPAYALLMLIGVLGGFFVVP). At 326-343 (LNALLQERGKKSVGAGNA) the chain is on the cytoplasmic side. A helical membrane pass occupies residues 344–364 (IAVQNLGENSAMLLMLGIYSL). The Periplasmic portion of the chain corresponds to 365–366 (AV). The helical transmembrane segment at 367–387 (LVGIPVVPIGIGFGTLFALAI) threads the bilayer. Residues 388–397 (TALWIWQRRH) are Cytoplasmic-facing.

The protein belongs to the major facilitator superfamily. LplT (TC 2.A.1.42) family.

The protein localises to the cell inner membrane. Catalyzes the facilitated diffusion of 2-acyl-glycero-3-phosphoethanolamine (2-acyl-GPE) into the cell. The chain is Lysophospholipid transporter LplT from Escherichia fergusonii (strain ATCC 35469 / DSM 13698 / CCUG 18766 / IAM 14443 / JCM 21226 / LMG 7866 / NBRC 102419 / NCTC 12128 / CDC 0568-73).